A 1332-amino-acid polypeptide reads, in one-letter code: DEMETER-like protein 2 (1332 aa).

A compositionally biased stretch (basic and acidic residues) spans 1-23 (MEVEGEVREKEARVKGRQPETEV). Disordered stretches follow at residues 1 to 29 (MEVE…GLPQ), 137 to 242 (VSTS…TSEE), and 280 to 317 (VEGS…KKTD). Positions 137–153 (VSTSTQRTEPESPQITL) are enriched in polar residues. The segment covering 223 to 236 (SKAGIKKSSIAATA) has biased composition (low complexity). A compositionally biased stretch (basic residues) spans 301–312 (PKGRRGQRRSNG). The interval 497 to 595 (KVQLDPETSR…AYMDLAAEFP (99 aa)) is DEMETER. A compositionally biased stretch (polar residues) spans 739-753 (HQQDPESTIQTQDQQ). The disordered stretch occupies residues 739 to 810 (HQQDPESTIQ…GGRKRERTER (72 aa)). Residues 763–777 (KNRKKPTTSKPKKKS) are compositionally biased toward basic residues. Positions 787 to 810 (KSVDWDSLRKEAESGGRKRERTER) are enriched in basic and acidic residues. Residues C970, C977, C980, and C986 each contribute to the [4Fe-4S] cluster site.

It belongs to the DNA glycosylase family. DEMETER subfamily. [4Fe-4S] cluster is required as a cofactor.

It localises to the nucleus. Its function is as follows. Potential transcriptional activator that may act by nicking the target promoter. Catalyzes the release of 5-methylcytosine (5-meC) from DNA by a glycosylase/lyase mechanism. The protein is DEMETER-like protein 2 (DML2) of Arabidopsis thaliana (Mouse-ear cress).